Consider the following 35-residue polypeptide: Cecropin-B (35 aa).

Residue Leu35 is modified to Leucine amide.

The protein belongs to the cecropin family.

The protein localises to the secreted. In terms of biological role, cecropins have lytic and antibacterial activity against several Gram-positive and Gram-negative bacteria. In Antheraea pernyi (Chinese oak silk moth), this protein is Cecropin-B.